The following is a 798-amino-acid chain: Heterogeneous nuclear ribonucleoprotein U (798 aa).

Residue Ser-2 is modified to N-acetylserine. Position 4 is a phosphoserine (Ser-4). One can recognise an SAP domain in the interval 8-42 (VKKLKVSELKEELKKRRLSDKGLKADLMDRLQAAL). Residues Lys-17 and Lys-21 each carry the N6-acetyllysine modification. The segment at 41–229 (ALDNEAGGRP…VKRPREDHGR (189 aa)) is disordered. Position 58 is a phosphoserine (Ser-58). 2 stretches are compositionally biased toward low complexity: residues 71–80 (AGLEQEAAAG) and 103–113 (ENGAAGAADAG). 2 stretches are compositionally biased toward acidic residues: residues 114–128 (AMEEEEAASEDENGD) and 134–147 (EGEDELGDEEEGAG). The segment covering 153 to 169 (GEQQSQPPAAAQQASQQ) has biased composition (low complexity). The residue at position 179 (Lys-179) is an N6-acetyllysine. Ser-180 bears the ADP-ribosylserine mark. The segment covering 192-203 (APPGARQGQQQA) has biased composition (low complexity). The segment covering 207–229 (GKTEQKAGDKKRGVKRPREDHGR) has biased composition (basic and acidic residues). Position 229 is a citrulline (Arg-229). Position 239 is an N6-acetyllysine; alternate (Lys-239). Lys-239 participates in a covalent cross-link: Glycyl lysine isopeptide (Lys-Gly) (interchain with G-Cter in SUMO1); alternate. Lys-239 participates in a covalent cross-link: Glycyl lysine isopeptide (Lys-Gly) (interchain with G-Cter in SUMO2); alternate. Position 240 is a phosphotyrosine (Tyr-240). Phosphoserine occurs at positions 241 and 245. The B30.2/SPRY domain occupies 242–438 (RAKSPQPPVE…VEFNFGQKEK (197 aa)). Phosphothreonine is present on Thr-260. Lys-326 is subject to N6-acetyllysine. Residues 462–646 (PKGPEEKKDC…QKLLEQYKEE (185 aa)) are ATPase domain. Lys-469 participates in a covalent cross-link: Glycyl lysine isopeptide (Lys-Gly) (interchain with G-Cter in SUMO2). Position 478 to 485 (478 to 485 (GLPGAGKT)) interacts with ATP. Residues Lys-490 and Lys-498 each carry the N6-acetyllysine; alternate modification. Residues Lys-490 and Lys-498 each participate in a glycyl lysine isopeptide (Lys-Gly) (interchain with G-Cter in SUMO2); alternate cross-link. A Phosphothreonine modification is found at Thr-506. Residue Lys-510 forms a Glycyl lysine isopeptide (Lys-Gly) (interchain with G-Cter in SUMO2) linkage. Lys-525 bears the N6-acetyllysine mark. Residue Lys-539 is modified to N6-acetyllysine; alternate. Lys-539 is covalently cross-linked (Glycyl lysine isopeptide (Lys-Gly) (interchain with G-Cter in SUMO2); alternate). Lys-548 participates in a covalent cross-link: Glycyl lysine isopeptide (Lys-Gly) (interchain with G-Cter in SUMO2). Thr-556 is subject to Phosphothreonine. Residues Lys-583 and Lys-600 each participate in a glycyl lysine isopeptide (Lys-Gly) (interchain with G-Cter in SUMO2) cross-link. Residues 585–600 (EDYKQRTQKKAEVEGK) are actin-binding. The residue at position 609 (Lys-609) is an N6-acetyllysine; alternate. Lys-609 is covalently cross-linked (Glycyl lysine isopeptide (Lys-Gly) (interchain with G-Cter in SUMO2); alternate). A coiled-coil region spans residues 624–651 (DEITYVELQKEEAQKLLEQYKEESKKAL). Glycyl lysine isopeptide (Lys-Gly) (interchain with G-Cter in SUMO2) cross-links involve residues Lys-638 and Lys-644. Residues 645-657 (EESKKALPPEKKQ) are compositionally biased toward basic and acidic residues. The interval 645 to 727 (EESKKALPPE…GSGGIGYPYP (83 aa)) is disordered. Arg-676 is subject to Omega-N-methylarginine. Over residues 684–702 (GGFNMRGGNFRGGAPGNRG) the composition is skewed to gly residues. Positions 688–713 (MRGGNFRGGAPGNRGGYNRRGNMPQR) are RNA-binding RGG-box. Asymmetric dimethylarginine occurs at positions 689, 694, and 701. 2 positions are modified to asymmetric dimethylarginine; alternate: Arg-707 and Arg-713. An omega-N-methylarginine; alternate mark is found at Arg-707 and Arg-713. Residues 713 to 723 (RGGGGGSGGIG) are compositionally biased toward gly residues. An asymmetric dimethylarginine mark is found at Arg-728 and Arg-735. Residues 743-772 (NYNRGGMPNRGNYNQNFRGRGNNRGYKNQS) are disordered. Position 787 is an N6-acetyllysine; alternate (Lys-787). Lys-787 participates in a covalent cross-link: Glycyl lysine isopeptide (Lys-Gly) (interchain with G-Cter in SUMO2); alternate.

In terms of assembly, oligomer (via ATPase domain and RNA-binding RGG-box region); oligomerization occurs upon ATP-binding in a chromatin-associated RNAs (caRNAs)- and transcription-dependent manner and is required for chromatin decompaction. ATP hydrolysis is required to cycle from an oligomeric to monomeric state to compact chromatin. Component of the coding region determinant (CRD)-mediated complex, composed of DHX9, HNRNPU, IGF2BP1, SYNCRIP and YBX1. Identified in the spliceosome C complex. Identified in a IGF2BP1-dependent mRNP granule complex containing untranslated mRNAs. Associates with heterogeneous nuclear ribonucleoprotein (hnRNP) particles. Associates (via middle region) with the C-terminal domain (CTD) RNA polymerase II (Pol II) holoenzyme; this association occurs in a RNA-independent manner. Associates (via middle region) with the core-TFIIH basal transcription factor complex; this association inhibits the CTD phosphorylation of RNA polymerase II holoenzyme by down-regulating TFIIH kinase activity. Associates with the telomerase holoenzyme complex. Associates with spindle microtubules (MTs) in a TPX2-dependent manner. Interacts (via C-terminus) with actin; this interaction is direct and mediates association with the phosphorylated CTD of RNA polymerase II and is disrupted in presence of the long non-coding H19 RNA. Interacts with AURKA. Interacts (via C-terminus) with CBX5; this interaction is, at least in part, RNA-dependent. Interacts with CR2. Interacts with CRY1. Interacts (via C-terminus) with EP300; this interaction enhances DNA-binding to nuclear scaffold/matrix attachment region (S/MAR) elements. Interacts with ERBB4. Interacts with GEMIN5. Interacts with IGF2BP1. Interacts with IGF2BP2 and IGF2BP3. Interacts with NCL; this interaction occurs during mitosis. Interacts (via C-terminus) with NR3C1 (via C-terminus). Interacts with PLK1; this interaction induces phosphorylation of HNRNPU at Ser-58 in mitosis. Interacts with POU3F4. Interacts with SMARCA4; this interaction occurs in embryonic stem cells and stimulates global Pol II-mediated transcription. Interacts (via C-terminus) with TOP2A; this interaction protects the topoisomerase TOP2A from degradation and positively regulates the relaxation of supercoiled DNA by TOP2A in a RNA-dependent manner. Interacts with TPX2; this interaction recruits HNRNPU to spindle microtubules (MTs). Interacts with UBQLN2. Interacts (via RNA-binding RGG-box region) with ZBTB7B; the interaction facilitates the recruitment of long non-coding RNA Blnc1 by ZBTB7B. Interacts with ERCC6. Post-translationally, cleaved at Asp-94 by CASP3 during T-cell apoptosis, resulting in a loss of DNA- and chromatin-binding activities. Extensively phosphorylated. Phosphorylated on Ser-58 by PLK1 and dephosphorylated by protein phosphatase 2A (PP2A) in mitosis. In terms of processing, arg-707 and Arg-713 are dimethylated, probably to asymmetric dimethylarginine. Post-translationally, citrullinated by PADI4.

The protein resides in the nucleus. Its subcellular location is the nucleus matrix. It is found in the chromosome. It localises to the nucleus speckle. The protein localises to the cytoplasm. The protein resides in the cytoskeleton. Its subcellular location is the microtubule organizing center. It is found in the centrosome. It localises to the centromere. The protein localises to the kinetochore. The protein resides in the spindle. Its subcellular location is the spindle pole. It is found in the midbody. It localises to the cell surface. The protein localises to the cytoplasmic granule. DNA- and RNA-binding protein involved in several cellular processes such as nuclear chromatin organization, telomere-length regulation, transcription, mRNA alternative splicing and stability, Xist-mediated transcriptional silencing and mitotic cell progression. Plays a role in the regulation of interphase large-scale gene-rich chromatin organization through chromatin-associated RNAs (caRNAs) in a transcription-dependent manner, and thereby maintains genomic stability. Required for the localization of the long non-coding Xist RNA on the inactive chromosome X (Xi) and the subsequent initiation and maintenance of X-linked transcriptional gene silencing during X-inactivation. Required for the topoisomerase TOP2A protein stability and activity in a RNA-dependent manner. Plays a role as a RNA polymerase II (Pol II) holoenzyme transcription regulator. Promotes transcription initiation by direct association with the core-TFIIH basal transcription factor complex for the assembly of a functional pre-initiation complex with Pol II in a actin-dependent manner. Blocks Pol II transcription elongation activity by inhibiting the C-terminal domain (CTD) phosphorylation of Pol II and dissociates from Pol II pre-initiation complex prior to productive transcription elongation. Positively regulates CBX5-induced transcriptional gene silencing and retention of CBX5 in the nucleus. Negatively regulates glucocorticoid-mediated transcriptional activation. Key regulator of transcription initiation and elongation in embryonic stem cells upon leukemia inhibitory factor (LIF) signaling. Involved in the long non-coding RNA H19-mediated Pol II transcriptional repression. Participates in the circadian regulation of the core clock component BMAL1 transcription. Plays a role in the regulation of telomere length. Plays a role as a global pre-mRNA alternative splicing modulator by regulating U2 small nuclear ribonucleoprotein (snRNP) biogenesis. Plays a role in mRNA stability. Component of the CRD-mediated complex that promotes MYC mRNA stabilization. Enhances the expression of specific genes, such as tumor necrosis factor TNFA, by regulating mRNA stability, possibly through binding to the 3'-untranslated region (UTR). Plays a role in mitotic cell cycle regulation. Involved in the formation of stable mitotic spindle microtubules (MTs) attachment to kinetochore, spindle organization and chromosome congression. Phosphorylation at Ser-58 by PLK1 is required for chromosome alignement and segregation and progression through mitosis. Also contributes to the targeting of AURKA to mitotic spindle MTs. Binds to double- and single-stranded DNA and RNA, poly(A), poly(C) and poly(G) oligoribonucleotides. Binds to chromatin-associated RNAs (caRNAs). Associates with chromatin to scaffold/matrix attachment region (S/MAR) elements in DNA. Associates with chromatin in a chromatin-associated RNAs (caRNAs)-dependent manner. Binds to the Xist RNA. Binds the long non-coding H19 RNA. Binds to SMN1/2 pre-mRNAs at G/U-rich regions. Binds to small nuclear RNAs (snRNAs). Binds to the 3'-UTR of TNFA mRNA. Binds (via RNA-binding RGG-box region) to the long non-coding Xist RNA; this binding is direct and bridges the Xist RNA and the inactive chromosome X (Xi). Also negatively regulates embryonic stem cell differentiation upon LIF signaling. Required for embryonic development. Binds to brown fat long non-coding RNA 1 (Blnc1); facilitates the recruitment of Blnc1 by ZBTB7B required to drive brown and beige fat development and thermogenesis. This Rattus norvegicus (Rat) protein is Heterogeneous nuclear ribonucleoprotein U.